The following is a 202-amino-acid chain: MSRYRGPRLRVVRRLGELPGLSRKTPRRAYPPGQHGQARKKRSEYAAQLEEKQKLRFNYGLSERQLLRYVRKARRAGGSTGQTLLQLLEMRLDNTIFRLGMAPTIPAARQLVNHGHVLVNGRVVSIASYQCRPGDVIQSRDRDASRKLIETHMQFPGLANIPTHLDFDKNTLTGKVNGVIEREWIALEINELLVVEYYSRKG.

Positions 17-42 (ELPGLSRKTPRRAYPPGQHGQARKKR) are disordered. Residues 90-152 (MRLDNTIFRL…DASRKLIETH (63 aa)) enclose the S4 RNA-binding domain.

It belongs to the universal ribosomal protein uS4 family. In terms of assembly, part of the 30S ribosomal subunit. Contacts protein S5. The interaction surface between S4 and S5 is involved in control of translational fidelity.

One of the primary rRNA binding proteins, it binds directly to 16S rRNA where it nucleates assembly of the body of the 30S subunit. Its function is as follows. With S5 and S12 plays an important role in translational accuracy. The polypeptide is Small ribosomal subunit protein uS4 (Acaryochloris marina (strain MBIC 11017)).